The following is a 500-amino-acid chain: Probable cytosol aminopeptidase (500 aa).

K264 and D269 together coordinate Mn(2+). The active site involves K276. Residues D287, D346, and E348 each coordinate Mn(2+). The active site involves R350.

It belongs to the peptidase M17 family. It depends on Mn(2+) as a cofactor.

The protein resides in the cytoplasm. It carries out the reaction Release of an N-terminal amino acid, Xaa-|-Yaa-, in which Xaa is preferably Leu, but may be other amino acids including Pro although not Arg or Lys, and Yaa may be Pro. Amino acid amides and methyl esters are also readily hydrolyzed, but rates on arylamides are exceedingly low.. The enzyme catalyses Release of an N-terminal amino acid, preferentially leucine, but not glutamic or aspartic acids.. Its function is as follows. Presumably involved in the processing and regular turnover of intracellular proteins. Catalyzes the removal of unsubstituted N-terminal amino acids from various peptides. The chain is Probable cytosol aminopeptidase from Nitrobacter hamburgensis (strain DSM 10229 / NCIMB 13809 / X14).